We begin with the raw amino-acid sequence, 139 residues long: NADPH-dependent 7-cyano-7-deazaguanine reductase (139 aa).

C34 (thioimide intermediate) is an active-site residue. The active-site Proton donor is the D41. Substrate contacts are provided by residues 56–58 (VEL) and 75–76 (HE).

This sequence belongs to the GTP cyclohydrolase I family. QueF type 1 subfamily.

It is found in the cytoplasm. The catalysed reaction is 7-aminomethyl-7-carbaguanine + 2 NADP(+) = 7-cyano-7-deazaguanine + 2 NADPH + 3 H(+). It functions in the pathway tRNA modification; tRNA-queuosine biosynthesis. Catalyzes the NADPH-dependent reduction of 7-cyano-7-deazaguanine (preQ0) to 7-aminomethyl-7-deazaguanine (preQ1). This is NADPH-dependent 7-cyano-7-deazaguanine reductase from Nitrosospira multiformis (strain ATCC 25196 / NCIMB 11849 / C 71).